The chain runs to 1465 residues: DNA polymerase III PolC-type (1465 aa).

An Exonuclease domain is found at 431–583; it reads DVETTGLSAM…YDAEATGRLL (153 aa).

It belongs to the DNA polymerase type-C family. PolC subfamily.

The protein localises to the cytoplasm. The enzyme catalyses DNA(n) + a 2'-deoxyribonucleoside 5'-triphosphate = DNA(n+1) + diphosphate. Functionally, required for replicative DNA synthesis. This DNA polymerase also exhibits 3' to 5' exonuclease activity. This is DNA polymerase III PolC-type from Streptococcus pyogenes.